Reading from the N-terminus, the 569-residue chain is Urease subunit beta (569 aa).

The Urease domain occupies 131–569 (GGIDTHIHFI…LSLAQLYNLF (439 aa)). Residues histidine 136, histidine 138, and lysine 219 each coordinate Ni(2+). N6-carboxylysine is present on lysine 219. Histidine 221 lines the substrate pocket. The Ni(2+) site is built by histidine 248 and histidine 274. The active-site Proton donor is histidine 322. Ni(2+) is bound at residue aspartate 362.

Belongs to the metallo-dependent hydrolases superfamily. Urease alpha subunit family. In terms of assembly, heterohexamer of 3 UreA (alpha) and 3 UreB (beta) subunits. Requires Ni cation as cofactor. Post-translationally, carboxylation allows a single lysine to coordinate two nickel ions.

The protein localises to the cytoplasm. The enzyme catalyses urea + 2 H2O + H(+) = hydrogencarbonate + 2 NH4(+). Its pathway is nitrogen metabolism; urea degradation; CO(2) and NH(3) from urea (urease route): step 1/1. This Helicobacter felis (strain ATCC 49179 / CCUG 28539 / NCTC 12436 / CS1) protein is Urease subunit beta.